The primary structure comprises 434 residues: 4-hydroxy-3-methylbut-2-en-1-yl diphosphate synthase (flavodoxin) (434 aa).

Over residues 1-15 the composition is skewed to polar residues; the sequence is MQSEAQSPRSSQICS. The segment at 1–20 is disordered; the sequence is MQSEAQSPRSSQICSTEPVF. The [4Fe-4S] cluster site is built by Cys322, Cys325, Cys368, and Glu375.

The protein belongs to the IspG family. It depends on [4Fe-4S] cluster as a cofactor.

The enzyme catalyses (2E)-4-hydroxy-3-methylbut-2-enyl diphosphate + oxidized [flavodoxin] + H2O + 2 H(+) = 2-C-methyl-D-erythritol 2,4-cyclic diphosphate + reduced [flavodoxin]. It participates in isoprenoid biosynthesis; isopentenyl diphosphate biosynthesis via DXP pathway; isopentenyl diphosphate from 1-deoxy-D-xylulose 5-phosphate: step 5/6. Functionally, converts 2C-methyl-D-erythritol 2,4-cyclodiphosphate (ME-2,4cPP) into 1-hydroxy-2-methyl-2-(E)-butenyl 4-diphosphate. The protein is 4-hydroxy-3-methylbut-2-en-1-yl diphosphate synthase (flavodoxin) of Burkholderia mallei (strain ATCC 23344).